Consider the following 361-residue polypeptide: Spermatogenesis-associated protein 17 (361 aa).

IQ domains follow at residues 32–61, 55–84, and 91–120; these read ENDAAVKIQSWFRGCQVRAYIRHLNRIVTI, LNRIVTIIQKWWRSFLGRKQYQLTVQVAYY, and YNAMAVRIQRRWRGYRVRKYLFNYYYLKEY.

The protein resides in the cytoplasm. In Homo sapiens (Human), this protein is Spermatogenesis-associated protein 17 (SPATA17).